Reading from the N-terminus, the 406-residue chain is Autotransporter heptosyltransferase TibC (406 aa).

ADP-D-glycero-beta-D-manno-heptose-binding residues include T107, L108, and G109. D110 functions as the Proton acceptor in the catalytic mechanism. The ADP-D-glycero-beta-D-manno-heptose site is built by Q224, T226, K230, R257, L281, G302, and E326. C339, C342, C358, and C370 together coordinate Fe(3+).

This sequence belongs to the glycosyltransferase 9 family. As to quaternary structure, homododecamer composed of 6 homodimers forming a ring. The cofactor is Fe(3+).

The catalysed reaction is ADP-D-glycero-beta-D-manno-heptose + L-seryl-[protein] = O-(D-glycero-alpha-D-manno-heptosyl)-L-seryl-[protein] + ADP + H(+). In terms of biological role, glycosylates adhesin TibA. Specifically adds anomer D-glycero-beta-D-manno-heptose. Cannot use ADP-L-glycero-beta-D-manno-heptose as a sugar donor. This is Autotransporter heptosyltransferase TibC from Escherichia coli O78:H11 (strain H10407 / ETEC).